Consider the following 428-residue polypeptide: C4-dicarboxylate transport protein (428 aa).

The next 9 helical transmembrane spans lie at Ser4–Gly24, Leu44–Met64, Val76–Val96, Ile142–Phe162, Val184–Met204, Leu222–Ala242, Val289–Leu309, Ile326–Val346, and Ile352–Ile372.

It belongs to the dicarboxylate/amino acid:cation symporter (DAACS) (TC 2.A.23) family.

The protein resides in the cell inner membrane. Functionally, responsible for the transport of dicarboxylates such as succinate, fumarate, and malate from the periplasm across the membrane. The sequence is that of C4-dicarboxylate transport protein from Salmonella arizonae (strain ATCC BAA-731 / CDC346-86 / RSK2980).